A 675-amino-acid chain; its full sequence is Vacuolar protein sorting-associated protein 5 (675 aa).

Disordered regions lie at residues 1 to 26 (MDYE…QSLV), 65 to 84 (EWKD…EHDN), and 165 to 219 (RAQR…RREN). Basic residues predominate over residues 168–180 (RNSKRNHSLKAKR). Residues 195 to 204 (PLKKAEKENE) are compositionally biased toward basic and acidic residues. The PX domain maps to 279–394 (VAFKVEVKDP…LFLTSDDFSS (116 aa)). A 1,2-diacyl-sn-glycero-3-phospho-(1D-myo-inositol-3-phosphate) is bound by residues Arg-320, Lys-346, and Arg-360.

It belongs to the sorting nexin family. As to quaternary structure, component of the retromer complex which consists of VPS29, VPS26, VPS35, VPS5 and VPS17. Component of a retromer subcomplex consisting of VPSD5 and VPS17. Post-translationally, phosphorylated on serine residue(s).

The protein resides in the cytoplasm. Its subcellular location is the golgi apparatus membrane. It is found in the endosome membrane. Its function is as follows. Plays a role in vesicular protein sorting. Required for retention of late Golgi membrane proteins and vacuolar biogenesis. Component of the membrane-associated retromer complex which is essential in endosome-to-Golgi retrograde transport. The VPS5-VPS17 subcomplex may assemble onto the membrane to promote vesicle formation. This chain is Vacuolar protein sorting-associated protein 5 (VPS5), found in Saccharomyces cerevisiae (strain ATCC 204508 / S288c) (Baker's yeast).